Consider the following 449-residue polypeptide: MMLGAEGGEGFVVKVRGLPWSCSADEVQRFFSDCKIQNGAQGIRFIYTREGRPSGEAFVELESEDEVKLALKKDRETMGHRYVEVFKSNNVEMDWVLKHTGPNSPDTANDGFVRLRGLPFGCSEEEIVQFFSGLEIVPNGITLPVDFQGRSTGEAFVQFASQEIAEKALKKHKERIGHRYIEIFKSSRAEVRTHYDPPRKLMAMQRPGPYDRPGAGRGYNSIGRGAGFERMRRGAYGGGYGGYDDYNGYNDGYGFGSDRFGRDLNYCFSGMSDHRYGDGGSTFQSTTGHCVHMRGLPYRATENDIYNFFSPLNPVRVHIETGPDGRVTGEADVEFATHEDAVAAMSKDKANMQHRYVELFLNSTAGASGGAYEHRYVELFLNSTAGASGGAYGSQMMGGMGLSNQSSYGGPASQQLSGGYGGGYGGQSSMSGYDQVLQENSSDFQSNIA.

An N-acetylmethionine modification is found at Met-1. Met-2 carries the post-translational modification N-acetylmethionine; in Heterogeneous nuclear ribonucleoprotein H, N-terminally processed. The RRM 1 domain occupies 11–90 (FVVKVRGLPW…RYVEVFKSNN (80 aa)). A Phosphoserine modification is found at Ser-23. A Glycyl lysine isopeptide (Lys-Gly) (interchain with G-Cter in SUMO2) cross-link involves residue Lys-35. Ser-54 and Ser-63 each carry phosphoserine. Residues Lys-87 and Lys-98 each participate in a glycyl lysine isopeptide (Lys-Gly) (interchain with G-Cter in SUMO2) cross-link. In terms of domain architecture, RRM 2 spans 111 to 188 (GFVRLRGLPF…RYIEIFKSSR (78 aa)). A Dimethylated arginine; alternate modification is found at Arg-233. Arg-233 bears the Omega-N-methylarginine; alternate mark. The 1-1 repeat unit spans residues 234–249 (GAYGGGYGGYDDYNGY). A 2 X 16 AA Gly-rich approximate repeats region spans residues 234 to 433 (GAYGGGYGGY…YGGQSSMSGY (200 aa)). Tyr-246 carries the phosphotyrosine modification. The region spanning 289–364 (HCVHMRGLPY…RYVELFLNST (76 aa)) is the RRM 3 domain. Ser-310 is modified (phosphoserine). A run of 3 repeats spans residues 354–372 (HRYV…GGAY), 374–392 (HRYV…GGAY), and 418–433 (GGYG…MSGY). The interval 354–392 (HRYVELFLNSTAGASGGAYEHRYVELFLNSTAGASGGAY) is 2 X 19 AA perfect repeats.

Part of a ternary complex containing FUBP2, PTBP1, PTBP2 and HNRNPH1. Identified in the spliceosome C complex. Interacts with IGF2BP1. Interacts with CUGBP1; the interaction is RNA-dependent. Interacts with MBNL1; the interaction in RNA-independent.

The protein localises to the nucleus. It localises to the nucleoplasm. In terms of biological role, this protein is a component of the heterogeneous nuclear ribonucleoprotein (hnRNP) complexes which provide the substrate for the processing events that pre-mRNAs undergo before becoming functional, translatable mRNAs in the cytoplasm. Mediates pre-mRNA alternative splicing regulation. Inhibits, together with CUGBP1, insulin receptor (IR) pre-mRNA exon 11 inclusion in myoblast. Binds to the IR RNA. Binds poly(RG). This chain is Heterogeneous nuclear ribonucleoprotein H (Hnrnph1), found in Rattus norvegicus (Rat).